Consider the following 1199-residue polypeptide: MNELSVNDAFDDIEIESFDFIWEEWEEYKGDVPLWQHIFCGSIAGLMEHVFMYPLDTLKTYFQTNGHMKYNMIYDNCNTINNNNNNIYRGNNSSYKNTCDKNYKDMNNHRNMQTFKRNFCSSTNCDKCIINNFCKYKTNCYNVMAALHTKNNRYIHNIAEPLKNMANYKINTTNNNNVNNIINNNNNNNKKKSRNIFSYPSHTKQYRNVTYVVNKKMQQNLFNNYISNKCINDPFCCRTKTNVLNMKKDIHKFCHLSKEKYNNVFYQNDTYHPNIYGRKRKTLCRNKNNINLFKNHVHKKYCHSLDDQICHSKIKEDMRNLQNFKNYTCAKNMKRHLYSTVPFFNLKNKGNKNITLPYKEIRSKYILKNGYKSMYQRNAGYYKNLIKMQSAKKNRHQLLALRKCLMSEKKYTIIKNEPFIIRKKKNMRNEYFIGNMKGRCIINTSLNSYTLKRNCLDYHHFVNNLKNICYSIMNICYNIKNTILINPSLPINNNNNNNNNTKMDTFIKLINKCLYNNNAHKIDHKILLSNYLNLFKHTNYSYYYILNNFLKNNAPCTSRKNEWNIFSNFINVLKNKIITNNVDYIRNPNVRRNQILRNNYLYSFLRNYNKNLKRNTHMILNKLTSFKYSIPYIKNKYSNVLINNINTNNNTYSNRNVLNSIRYNNIYKNIMHPIFFPGYYNTIHFRYYNYFSRIIDDKDKGKNKNIINISTKRNNCSSIIRNNLSNLYKGVNVVVLGCIPAHALYFSTFEYSKKYFSRMTSNNSSLKMNNRNISTVSNDIKSEKSNFKLYDLNYFSIAVSGFLATLVHDLIITPIDTLKQRIQLGINKNSKDSLKLLKQNGIRSLYLSLPITLLMNIPYQIIMICTNEKMKKIYFEYICGLNTQNNKKNMENKVIDKVHDETRNQDNIGKDIKNDTYNMDKNGTFLRNQEMINKENRIYNSGALEKHVTSQEKEDKILQSVKQENVSSNNDIVNFYEGQSIYNNDAHNIIRDDINKMTHKNLENNIDNTINSNESDVNRIDNMTNDMNKECDIFSINKNNNSTVLYDQIMKRLEMNSSNKNFSLNFHDKIIRQESSPFEKENYNMNLKNIWIDNYKNDFFNKPFNHITSYFVCAGIGGGIAAVLTNPLDVIKTRIQTECFQTKGFNFFRIVSNIYYREGMRSFFKGSLARMALCIPASAVSWGTYETMKRFFKINFNTT.

A helical membrane pass occupies residues 32-52; it reads VPLWQHIFCGSIAGLMEHVFM. Residues asparagine 92, asparagine 171, asparagine 208, asparagine 268, asparagine 326, asparagine 353, asparagine 443, asparagine 499, asparagine 539, asparagine 649, asparagine 708, asparagine 715, and asparagine 723 are each glycosylated (N-linked (GlcNAc...) asparagine). A helical transmembrane segment spans residues 730 to 750; sequence GVNVVVLGCIPAHALYFSTFE. N-linked (GlcNAc...) asparagine glycans are attached at residues asparagine 763 and asparagine 772. The stretch at 792–873 is one Solcar 1 repeat; that stretch reads LNYFSIAVSG…ICTNEKMKKI (82 aa). 2 helical membrane passes run 795 to 815 and 845 to 865; these read FSIA…ITPI and LYLS…IMIC. N-linked (GlcNAc...) asparagine glycans are attached at residues asparagine 914, asparagine 922, asparagine 965, asparagine 1013, asparagine 1022, asparagine 1041, and asparagine 1056. The Solcar 2 repeat unit spans residues 1109 to 1191; that stretch reads SYFVCAGIGG…WGTYETMKRF (83 aa). Residues 1111 to 1131 form a helical membrane-spanning segment; sequence FVCAGIGGGIAAVLTNPLDVI.

It belongs to the mitochondrial carrier (TC 2.A.29) family.

The protein resides in the mitochondrion membrane. In terms of biological role, putative iron transporter. The protein is Putative mitoferrin of Plasmodium falciparum (isolate 3D7).